A 468-amino-acid chain; its full sequence is MKLPDKLGPIHFIGIGGIGMSGIAEVMHNLGYTVQGSDASDNANVRRLAEKGMRTFVGHDAKNVEEAALVVVSTAIRRDNPELQAARERRLPVVRRAEMLAELMRFKSCVAIAGTHGKTTTTSLVATLLDAGNLDPTVINGGIINAYGTNARMGAGEWMVVEADESDGTFLKLPADVAIVTNIDPEHLDHFGSFDAIKDAFRRFIDNIPFYGFAVMCIDHPVVQDLVGHIEDRRIITYGENPQADVRLIDVDLRGGQSRFRVMIRDRRPGYRMEMEDLVLPMPGKHNALNATAALAVAHELGVKPDAIRQALAGFGGVKRRFTRTGEWNGATIFDDYGHHPVEIKAVLKAARASTEHGVIAVVQPHRYTRLQSLFDDFCTCFNDADTVIVAPVYAAGEQPIEGFDRDSLVAGLRSRGHRDARALERPEELAGIIADLAKPGDYVVCLGAGTITQWAYALPDELTARGR.

An ATP-binding site is contributed by 114 to 120 (GTHGKTT).

The protein belongs to the MurCDEF family.

It is found in the cytoplasm. The catalysed reaction is UDP-N-acetyl-alpha-D-muramate + L-alanine + ATP = UDP-N-acetyl-alpha-D-muramoyl-L-alanine + ADP + phosphate + H(+). Its pathway is cell wall biogenesis; peptidoglycan biosynthesis. Its function is as follows. Cell wall formation. The chain is UDP-N-acetylmuramate--L-alanine ligase from Methylobacterium radiotolerans (strain ATCC 27329 / DSM 1819 / JCM 2831 / NBRC 15690 / NCIMB 10815 / 0-1).